Consider the following 676-residue polypeptide: Translation initiation factor IF-2, mitochondrial (676 aa).

Positions 143-326 (KRAPVVTIMG…MDIRAENSPK (184 aa)) constitute a tr-type G domain. Residues 152 to 159 (GHVDHGKT) are G1. 152-159 (GHVDHGKT) contacts GTP. Residues 177–181 (GITQH) form a G2 region. GTP contacts are provided by residues 200–203 (DTPG) and 254–257 (TKID). The interval 200–203 (DTPG) is G3. A G4 region spans residues 254–257 (TKID). Positions 296–298 (SAK) are G5.

This sequence belongs to the TRAFAC class translation factor GTPase superfamily. Classic translation factor GTPase family. IF-2 subfamily.

Its subcellular location is the mitochondrion. In terms of biological role, one of the essential components for the initiation of protein synthesis. Protects formylmethionyl-tRNA from spontaneous hydrolysis and promotes its binding to the 30S ribosomal subunits. Also involved in the hydrolysis of GTP during the formation of the 70S ribosomal complex. The protein is Translation initiation factor IF-2, mitochondrial (IFM1) of Saccharomyces cerevisiae (strain ATCC 204508 / S288c) (Baker's yeast).